Consider the following 102-residue polypeptide: Small ribosomal subunit protein uS10 (102 aa).

Belongs to the universal ribosomal protein uS10 family. Part of the 30S ribosomal subunit.

Functionally, involved in the binding of tRNA to the ribosomes. This chain is Small ribosomal subunit protein uS10, found in Acidothermus cellulolyticus (strain ATCC 43068 / DSM 8971 / 11B).